The primary structure comprises 444 residues: Probable D-serine dehydratase (444 aa).

K118 is modified (N6-(pyridoxal phosphate)lysine).

This sequence belongs to the serine/threonine dehydratase family. DsdA subfamily. Pyridoxal 5'-phosphate is required as a cofactor.

The catalysed reaction is D-serine = pyruvate + NH4(+). This Acinetobacter baumannii (strain ACICU) protein is Probable D-serine dehydratase.